The chain runs to 344 residues: Glycerol-3-phosphate dehydrogenase [NAD(P)+] (344 aa).

W18, H38, and K115 together coordinate NADPH. Sn-glycerol 3-phosphate contacts are provided by K115, G144, and T146. A148 is a binding site for NADPH. Residues K199, D252, S262, R263, and N264 each contribute to the sn-glycerol 3-phosphate site. Residue K199 is the Proton acceptor of the active site. NADPH is bound at residue R263. NADPH contacts are provided by V288 and E290.

This sequence belongs to the NAD-dependent glycerol-3-phosphate dehydrogenase family.

Its subcellular location is the cytoplasm. The enzyme catalyses sn-glycerol 3-phosphate + NAD(+) = dihydroxyacetone phosphate + NADH + H(+). It catalyses the reaction sn-glycerol 3-phosphate + NADP(+) = dihydroxyacetone phosphate + NADPH + H(+). Its pathway is membrane lipid metabolism; glycerophospholipid metabolism. Its function is as follows. Catalyzes the reduction of the glycolytic intermediate dihydroxyacetone phosphate (DHAP) to sn-glycerol 3-phosphate (G3P), the key precursor for phospholipid synthesis. This chain is Glycerol-3-phosphate dehydrogenase [NAD(P)+], found in Hydrogenovibrio crunogenus (strain DSM 25203 / XCL-2) (Thiomicrospira crunogena).